Reading from the N-terminus, the 415-residue chain is MIENYNDIAITDTRRKILNIIDKTLIAMDPENAIKNFIEKNNIKFDSKRIFLIGFGKAAFKMYSGIRPFILKDLVYASIIVPDDEKTNDYNELRILRGTHPFTGDLSVSSSISMLSGLKNLNENDLVIVLISGGGSSLFEIPEDGINIDDIKNISKTMMDKGCDIYELNMVRSMLSKVKGGKLATMLYPARVISFIISDVKNDDLSIIASGPLTRIDYRIEDLMETIKKYLGNDERIKMYRNIDDIYFNNVKQYIILKNRDFLDYIYSNINDDAVNLGSNFSGNVEDLSLILHNILKNIYSSKRKPFYFMLGGETTVDVKGHGSGGRNQELVLRFMKNSSNSEVYTIASFGTDGIDGVSPAAGGIVDSDHEIDNINEYLNRNDSYNLLIKNHGAIITGRTGNNVSDIIIGLYYNK.

Position 57 (Lys57) interacts with substrate.

This sequence belongs to the glycerate kinase type-1 family. In terms of assembly, homodimer. The cofactor is Mg(2+). Ni(2+) serves as cofactor. Mn(2+) is required as a cofactor. It depends on Co(2+) as a cofactor.

It carries out the reaction (R)-glycerate + ATP = (2R)-2-phosphoglycerate + ADP + H(+). Catalyzes the ATP-dependent phosphorylation of D-glycerate to 2-phosphoglycerate. It can also partially utilize GTP, CTP or UTP as phosphate donor. In Picrophilus torridus (strain ATCC 700027 / DSM 9790 / JCM 10055 / NBRC 100828 / KAW 2/3), this protein is Glycerate 2-kinase (gck).